Here is a 146-residue protein sequence, read N- to C-terminus: Hemoglobin subunit beta-1 (146 aa).

Positions 2-146 (HWTEKERTII…VVSALGKQYH (145 aa)) constitute a Globin domain. H63 and H92 together coordinate heme b.

Belongs to the globin family. In terms of assembly, hb1 is a heterotetramer of two alpha chains and two beta-1 chains. Red blood cells.

In terms of biological role, involved in oxygen transport from gills to the various peripheral tissues. In Dissostichus eleginoides (Patagonian toothfish), this protein is Hemoglobin subunit beta-1.